We begin with the raw amino-acid sequence, 338 residues long: Protein SPATA31F3 (338 aa).

The chain crosses the membrane as a helical span at residues 7 to 29; sequence VLWDVGYPLYTYGSICIIALIIW. Ser-152 bears the Phosphoserine mark. Residues 290 to 306 are compositionally biased toward basic and acidic residues; the sequence is DRTKNIEKSPTVTKDHV. The tract at residues 290-338 is disordered; it reads DRTKNIEKSPTVTKDHVWGATTQKTTEDPEAQPPSTEEEGLIFCDAPSA.

This sequence belongs to the SPATA31 family.

Its subcellular location is the membrane. The polypeptide is Protein SPATA31F3 (Homo sapiens (Human)).